We begin with the raw amino-acid sequence, 108 residues long: uncharacterized protein (108 aa).

Residues 1-21 (MFRSLFLAAALMAFTPLAANA) form the signal peptide.

It to E.coli YaaX.

This is an uncharacterized protein from Escherichia coli O157:H7.